The sequence spans 161 residues: Large ribosomal subunit protein uL15 (161 aa).

Basic and acidic residues predominate over residues 1-13 (MKLNELRDNEGAA). Positions 1 to 51 (MKLNELRDNEGAARKKKRVARGPGSGKGKTAGRGIKGQKSRSGVALNGYEG) are disordered. Over residues 23–35 (PGSGKGKTAGRGI) the composition is skewed to gly residues.

This sequence belongs to the universal ribosomal protein uL15 family. As to quaternary structure, part of the 50S ribosomal subunit.

Binds to the 23S rRNA. This Cereibacter sphaeroides (strain ATCC 17023 / DSM 158 / JCM 6121 / CCUG 31486 / LMG 2827 / NBRC 12203 / NCIMB 8253 / ATH 2.4.1.) (Rhodobacter sphaeroides) protein is Large ribosomal subunit protein uL15.